A 149-amino-acid polypeptide reads, in one-letter code: Large ribosomal subunit protein eL24B (149 aa).

A Phosphoserine modification is found at Ser-50. Residues 96-149 form a disordered region; the sequence is QRPEVRAAARAAALKQRKDKRAASESEKKAIKAKSAASSARGQAIKNAKVAARR. The span at 116–125 shows a compositional bias: basic and acidic residues; the sequence is RAASESEKKA.

Belongs to the eukaryotic ribosomal protein eL24 family. In terms of assembly, component of the large ribosomal subunit (LSU). Mature yeast ribosomes consist of a small (40S) and a large (60S) subunit. The 40S small subunit contains 1 molecule of ribosomal RNA (18S rRNA) and at least 33 different proteins. The large 60S subunit contains 3 rRNA molecules (25S, 5.8S and 5S rRNA) and at least 46 different proteins.

The protein resides in the cytoplasm. In terms of biological role, component of the ribosome, a large ribonucleoprotein complex responsible for the synthesis of proteins in the cell. The small ribosomal subunit (SSU) binds messenger RNAs (mRNAs) and translates the encoded message by selecting cognate aminoacyl-transfer RNA (tRNA) molecules. The large subunit (LSU) contains the ribosomal catalytic site termed the peptidyl transferase center (PTC), which catalyzes the formation of peptide bonds, thereby polymerizing the amino acids delivered by tRNAs into a polypeptide chain. The nascent polypeptides leave the ribosome through a tunnel in the LSU and interact with protein factors that function in enzymatic processing, targeting, and the membrane insertion of nascent chains at the exit of the ribosomal tunnel. This is Large ribosomal subunit protein eL24B (rpl2402) from Schizosaccharomyces pombe (strain 972 / ATCC 24843) (Fission yeast).